The primary structure comprises 122 residues: Fluoride-specific ion channel FluC (122 aa).

The next 4 membrane-spanning stretches (helical) occupy residues 4 to 24 (LLIA…GTAI), 34 to 54 (IGTM…MTLL), 66 to 86 (LALV…EWET), and 95 to 115 (FWIG…AVWF). Na(+) is bound by residues Gly74 and Thr77.

It belongs to the fluoride channel Fluc/FEX (TC 1.A.43) family.

It localises to the cell inner membrane. It catalyses the reaction fluoride(in) = fluoride(out). Its activity is regulated as follows. Na(+) is not transported, but it plays an essential structural role and its presence is essential for fluoride channel function. Fluoride-specific ion channel. Important for reducing fluoride concentration in the cell, thus reducing its toxicity. This chain is Fluoride-specific ion channel FluC, found in Solibacter usitatus (strain Ellin6076).